The sequence spans 221 residues: GTP-binding nuclear protein Ran-3 (221 aa).

One can recognise a Small GTPase Ran-type domain in the interval 10–174; the sequence is DYPSFKLVIV…LYLARKLAGD (165 aa). 21-28 is a GTP binding site; the sequence is DGGTGKTT. The tract at residues 40–48 is switch-I; the sequence is KKYEPTIGV. GTP-binding positions include G71, 125–128, and 153–155; these read NKVD and SAK. A switch-II region spans residues 71–87; it reads GQEKFGGLRDGYYIHGQ. A disordered region spans residues 201–221; sequence EAELAAAASQPLPDDDDDTFE.

It belongs to the small GTPase superfamily. Ran family. Found in a nuclear export complex with RanGTP, exportin and pre-miRNA. Interacts with RanBP1a and RanBP1b. Interacts with KPNB1.

The protein localises to the nucleus. In terms of biological role, GTP-binding protein involved in nucleocytoplasmic transport. Required for the import of protein into the nucleus and also for RNA export. Involved in chromatin condensation and control of cell cycle. This is GTP-binding nuclear protein Ran-3 (RAN3) from Arabidopsis thaliana (Mouse-ear cress).